We begin with the raw amino-acid sequence, 232 residues long: Ubiquinone biosynthesis O-methyltransferase (232 aa).

Residues Arg-36, Gly-55, Asp-76, and Leu-120 each coordinate S-adenosyl-L-methionine.

The protein belongs to the methyltransferase superfamily. UbiG/COQ3 family.

The catalysed reaction is a 3-demethylubiquinol + S-adenosyl-L-methionine = a ubiquinol + S-adenosyl-L-homocysteine + H(+). It catalyses the reaction a 3-(all-trans-polyprenyl)benzene-1,2-diol + S-adenosyl-L-methionine = a 2-methoxy-6-(all-trans-polyprenyl)phenol + S-adenosyl-L-homocysteine + H(+). The protein operates within cofactor biosynthesis; ubiquinone biosynthesis. O-methyltransferase that catalyzes the 2 O-methylation steps in the ubiquinone biosynthetic pathway. The sequence is that of Ubiquinone biosynthesis O-methyltransferase from Pseudomonas aeruginosa (strain LESB58).